A 319-amino-acid polypeptide reads, in one-letter code: Small ribosomal subunit protein mS35 (319 aa).

Residues 1–30 constitute a mitochondrion transit peptide; sequence MKVPLGLWKVSRGNLWSTQKRVLTMSRCLN.

Belongs to the mitochondrion-specific ribosomal protein mS35 family. Component of the mitochondrial small ribosomal subunit (mt-SSU). Mature yeast 74S mitochondrial ribosomes consist of a small (37S) and a large (54S) subunit. The 37S small subunit contains a 15S ribosomal RNA (15S mt-rRNA) and 34 different proteins. The 54S large subunit contains a 21S rRNA (21S mt-rRNA) and 46 different proteins.

The protein resides in the mitochondrion. Functionally, component of the mitochondrial ribosome (mitoribosome), a dedicated translation machinery responsible for the synthesis of mitochondrial genome-encoded proteins, including at least some of the essential transmembrane subunits of the mitochondrial respiratory chain. The mitoribosomes are attached to the mitochondrial inner membrane and translation products are cotranslationally integrated into the membrane. This chain is Small ribosomal subunit protein mS35 (RSM24), found in Saccharomyces cerevisiae (strain ATCC 204508 / S288c) (Baker's yeast).